Here is a 246-residue protein sequence, read N- to C-terminus: MTDRDTLFSAPIASLGDWTFDERVAEVFPDMIQRSVPGYSNIISMIGMLAERFVQPGTQVYDLGCSLGAATLSVRRNVHHQGCKIIAVDNSPAMVERCRRHLDAYKAPTPVDVIEGDIRTIEIKNASMVVLNFTLQFLEPDNRQLLLDKIYQGLNPGGALVLSEKFSFEDASVGELLFNMHHDFKRANGYSELEISQKRSMLENVMLTDSVEAHKARLHKAGFEHSELWFQCFNFGSLVALKGGQA.

Residues Y39, 64–66, 89–90, 117–118, N132, and R199 each bind S-adenosyl-L-methionine; these read GCS, DN, and DI.

This sequence belongs to the class I-like SAM-binding methyltransferase superfamily. Cx-SAM synthase family. Homodimer.

It catalyses the reaction prephenate + S-adenosyl-L-methionine = carboxy-S-adenosyl-L-methionine + 3-phenylpyruvate + H2O. In terms of biological role, catalyzes the conversion of S-adenosyl-L-methionine (SAM) to carboxy-S-adenosyl-L-methionine (Cx-SAM). The chain is Carboxy-S-adenosyl-L-methionine synthase from Enterobacter sp. (strain 638).